Reading from the N-terminus, the 810-residue chain is S-adenosyl-L-methionine-dependent tRNA 4-demethylwyosine synthase (810 aa).

Disordered stretches follow at residues 86-116 (NGGG…KGGC) and 156-176 (RSST…VGKK). The segment covering 104-116 (GCCSSKGGKKGGC) has biased composition (low complexity). A compositionally biased stretch (polar residues) spans 159–172 (TPKVFSKNSSSNSR). One can recognise a Flavodoxin-like domain in the interval 205 to 360 (IYVLYSSLQG…KIDEWTSLLA (156 aa)). FMN is bound by residues 211–215 (SLQGA) and 304–337 (VLGL…RRIF). The segment covering 374 to 397 (DENADSEEDEEEGNGSDELGDVED) has biased composition (acidic residues). Residues 374–407 (DENADSEEDEEEGNGSDELGDVEDIGGKGSNGKF) form a disordered region. Residues 463–713 (FNIASSRCME…ELQRRGLHYD (251 aa)) form the Radical SAM core domain. [4Fe-4S] cluster contacts are provided by Cys479, Cys483, and Cys486. Lys496 is covalently cross-linked (Glycyl lysine isopeptide (Lys-Gly) (interchain with G-Cter in ubiquitin)). The segment at 782-810 (RVYRKDKKKQNKENQETTTRETPLPPIPA) is disordered.

This sequence belongs to the TYW1 family. The cofactor is [4Fe-4S] cluster.

It localises to the endoplasmic reticulum. It catalyses the reaction N(1)-methylguanosine(37) in tRNA(Phe) + pyruvate + S-adenosyl-L-methionine = 4-demethylwyosine(37) in tRNA(Phe) + 5'-deoxyadenosine + L-methionine + CO2 + H2O. It functions in the pathway tRNA modification; wybutosine-tRNA(Phe) biosynthesis. Functionally, component of the wybutosine biosynthesis pathway. Wybutosine is a hyper modified guanosine with a tricyclic base found at the 3'-position adjacent to the anticodon of eukaryotic phenylalanine tRNA. Catalyzes the condensation of N-methylguanine with 2 carbon atoms from pyruvate to form the tricyclic 4-demethylwyosine, an intermediate in wybutosine biosynthesis. This Saccharomyces cerevisiae (strain ATCC 204508 / S288c) (Baker's yeast) protein is S-adenosyl-L-methionine-dependent tRNA 4-demethylwyosine synthase (TYW1).